We begin with the raw amino-acid sequence, 218 residues long: Adenylate kinase (218 aa).

ATP is bound at residue glycine 10–threonine 15. An NMP region spans residues serine 30 to valine 59. AMP contacts are provided by residues threonine 31, arginine 36, glutamine 57–valine 59, glycine 85–arginine 88, and glutamine 92. The segment at glycine 122–aspartate 159 is LID. Residues arginine 123 and threonine 132 to tyrosine 133 each bind ATP. Residues proline 127–glycine 150 are disordered. Residues arginine 156 and arginine 167 each coordinate AMP. Glycine 203 serves as a coordination point for ATP.

It belongs to the adenylate kinase family. Monomer.

Its subcellular location is the cytoplasm. The catalysed reaction is AMP + ATP = 2 ADP. It participates in purine metabolism; AMP biosynthesis via salvage pathway; AMP from ADP: step 1/1. Catalyzes the reversible transfer of the terminal phosphate group between ATP and AMP. Plays an important role in cellular energy homeostasis and in adenine nucleotide metabolism. This is Adenylate kinase from Acidovorax ebreus (strain TPSY) (Diaphorobacter sp. (strain TPSY)).